A 342-amino-acid polypeptide reads, in one-letter code: Putative ABC transporter anion-binding protein HVO_1888 (342 aa).

Residues methionine 1 to alanine 32 constitute a signal peptide (tat-type signal). Polar residues predominate over residues threonine 24 to alanine 37. The segment at threonine 24 to glutamate 52 is disordered.

In terms of assembly, the complex is composed of two ATP-binding proteins (HVO_1886), two transmembrane proteins (HVO_1887) and a solute-binding protein (HVO_1888). In terms of processing, predicted to be exported by the Tat system. The position of the signal peptide cleavage has not been experimentally proven.

Part of an ABC transporter complex involved in anions import. The sequence is that of Putative ABC transporter anion-binding protein HVO_1888 from Haloferax volcanii (strain ATCC 29605 / DSM 3757 / JCM 8879 / NBRC 14742 / NCIMB 2012 / VKM B-1768 / DS2) (Halobacterium volcanii).